Here is a 188-residue protein sequence, read N- to C-terminus: Holliday junction branch migration complex subunit RuvA (188 aa).

The domain I stretch occupies residues 1 to 64; the sequence is MIAGISGRVL…QDGITLYGFS (64 aa). The domain II stretch occupies residues 65-143; the sequence is NERKKELFLS…SAGIKDMRIY (79 aa). Position 143 (Tyr143) is a region of interest, flexible linker. The domain III stretch occupies residues 143–188; it reads YHESLEALISLGYPEKQAREAVKHVYREGMKTSELIKEALKFLSQR.

Belongs to the RuvA family. In terms of assembly, homotetramer. Forms an RuvA(8)-RuvB(12)-Holliday junction (HJ) complex. HJ DNA is sandwiched between 2 RuvA tetramers; dsDNA enters through RuvA and exits via RuvB. An RuvB hexamer assembles on each DNA strand where it exits the tetramer. Each RuvB hexamer is contacted by two RuvA subunits (via domain III) on 2 adjacent RuvB subunits; this complex drives branch migration. In the full resolvosome a probable DNA-RuvA(4)-RuvB(12)-RuvC(2) complex forms which resolves the HJ.

The protein localises to the cytoplasm. The RuvA-RuvB-RuvC complex processes Holliday junction (HJ) DNA during genetic recombination and DNA repair, while the RuvA-RuvB complex plays an important role in the rescue of blocked DNA replication forks via replication fork reversal (RFR). RuvA specifically binds to HJ cruciform DNA, conferring on it an open structure. The RuvB hexamer acts as an ATP-dependent pump, pulling dsDNA into and through the RuvAB complex. HJ branch migration allows RuvC to scan DNA until it finds its consensus sequence, where it cleaves and resolves the cruciform DNA. The chain is Holliday junction branch migration complex subunit RuvA from Thermotoga petrophila (strain ATCC BAA-488 / DSM 13995 / JCM 10881 / RKU-1).